The chain runs to 180 residues: uncharacterized protein (180 aa).

This is an uncharacterized protein from Haemophilus influenzae (strain ATCC 51907 / DSM 11121 / KW20 / Rd).